Reading from the N-terminus, the 269-residue chain is uncharacterized protein (269 aa).

15–41 is a binding site for NADP(+); it reads QKSVLITGCSSGIGLESALELKRQGFH. Serine 146 is a binding site for substrate. Tyrosine 159 serves as the catalytic Proton acceptor.

This sequence belongs to the short-chain dehydrogenases/reductases (SDR) family.

This is an uncharacterized protein from Escherichia coli O6:H1 (strain CFT073 / ATCC 700928 / UPEC).